The chain runs to 505 residues: Oxidative stress-induced growth inhibitor 2 (505 aa).

It belongs to the OKL38 family. It depends on NADPH as a cofactor. In terms of tissue distribution, ubiquitous. Expressed at higher levels in testis and ovary.

Its subcellular location is the midbody. Functionally, monooxygenase catalytic activity. May be involved in meiosis or the maturation of germ cells. This chain is Oxidative stress-induced growth inhibitor 2, found in Homo sapiens (Human).